The following is a 334-amino-acid chain: Cytoskeleton protein RodZ (334 aa).

The Cytoplasmic portion of the chain corresponds to 1–111 (MNTEATHDQN…LGKRRKKRDG (111 aa)). Residues 19–71 (LRNAREQLGLSQQAVAERLCLKVSTVRDIEEDKAPSDLASTFLRGYIRSYARL) form the HTH cro/C1-type domain. The H-T-H motif DNA-binding region spans 30 to 49 (QQAVAERLCLKVSTVRDIEE). A helical; Signal-anchor for type II membrane protein membrane pass occupies residues 112 to 132 (WLMSFTWLVLFVVVGLTGAWW). Residues 133–334 (WQNHKAQQEE…TLNAEPTPAQ (202 aa)) are Periplasmic-facing. Disordered regions lie at residues 155–207 (NADK…ATQN) and 221–241 (ATSA…SQAG). Over residues 176 to 207 (TTPAQTAPAPATPVDSTAATQTPAATATATQN) the composition is skewed to low complexity.

This sequence belongs to the RodZ family.

It is found in the cell inner membrane. Cytoskeletal protein that is involved in cell-shape control through regulation of the length of the long axis. The chain is Cytoskeleton protein RodZ from Salmonella schwarzengrund (strain CVM19633).